A 735-amino-acid polypeptide reads, in one-letter code: Photosystem I P700 chlorophyll a apoprotein A2 (735 aa).

A run of 8 helical transmembrane segments spans residues 46-69, 135-158, 175-199, 273-291, 333-356, 372-398, 420-442, and 518-536; these read LFST…FHIA, LYQG…LHLQ, LNHH…HVAI, IAHH…GHMY, LHFQ…QHMY, AALY…IFFI, AIIS…LYVH, and FLVH…LILV. [4Fe-4S] cluster contacts are provided by Cys560 and Cys569. 2 helical membrane-spanning segments follow: residues 576–597 and 644–666; these read AFYL…YWHW and LAVW…MFLI. Chlorophyll a-binding residues include His655, Met663, and Tyr671. Phylloquinone is bound at residue Trp672. Residues 708–728 form a helical membrane-spanning segment; the sequence is VVGLAHFSVGYVLTYAAFLIA.

The protein belongs to the PsaA/PsaB family. The PsaA/B heterodimer binds the P700 chlorophyll special pair and subsequent electron acceptors. PSI consists of a core antenna complex that captures photons, and an electron transfer chain that converts photonic excitation into a charge separation. The cyanobacterial PSI reaction center is composed of one copy each of PsaA,B,C,D,E,F,I,J,K,L,M and X, and forms trimeric complexes. It depends on PSI electron transfer chain: 5 chlorophyll a, 1 chlorophyll a', 2 phylloquinones and 3 4Fe-4S clusters. PSI core antenna: 90 chlorophyll a, 22 carotenoids, 3 phospholipids and 1 galactolipid. P700 is a chlorophyll a/chlorophyll a' dimer, A0 is one or more chlorophyll a, A1 is one or both phylloquinones and FX is a shared 4Fe-4S iron-sulfur center. as a cofactor.

It is found in the cellular thylakoid membrane. The enzyme catalyses reduced [plastocyanin] + hnu + oxidized [2Fe-2S]-[ferredoxin] = oxidized [plastocyanin] + reduced [2Fe-2S]-[ferredoxin]. PsaA and PsaB bind P700, the primary electron donor of photosystem I (PSI), as well as the electron acceptors A0, A1 and FX. PSI is a plastocyanin/cytochrome c6-ferredoxin oxidoreductase, converting photonic excitation into a charge separation, which transfers an electron from the donor P700 chlorophyll pair to the spectroscopically characterized acceptors A0, A1, FX, FA and FB in turn. Oxidized P700 is reduced on the lumenal side of the thylakoid membrane by plastocyanin or cytochrome c6. The polypeptide is Photosystem I P700 chlorophyll a apoprotein A2 (Synechococcus sp. (strain CC9902)).